The sequence spans 514 residues: UDP-N-acetylmuramoyl-L-alanyl-D-glutamate--2,6-diaminopimelate ligase (514 aa).

Position 37 (threonine 37) interacts with UDP-N-acetyl-alpha-D-muramoyl-L-alanyl-D-glutamate. 125–131 (GTNGKTS) is an ATP binding site. UDP-N-acetyl-alpha-D-muramoyl-L-alanyl-D-glutamate is bound by residues 167–168 (TT), serine 194, glutamine 200, and arginine 202. Lysine 234 is subject to N6-carboxylysine. Residues arginine 406, 430-433 (DNPR), glycine 481, and glutamate 485 contribute to the meso-2,6-diaminopimelate site. A Meso-diaminopimelate recognition motif motif is present at residues 430–433 (DNPR).

This sequence belongs to the MurCDEF family. MurE subfamily. Mg(2+) is required as a cofactor. Carboxylation is probably crucial for Mg(2+) binding and, consequently, for the gamma-phosphate positioning of ATP.

It is found in the cytoplasm. It catalyses the reaction UDP-N-acetyl-alpha-D-muramoyl-L-alanyl-D-glutamate + meso-2,6-diaminopimelate + ATP = UDP-N-acetyl-alpha-D-muramoyl-L-alanyl-gamma-D-glutamyl-meso-2,6-diaminopimelate + ADP + phosphate + H(+). It participates in cell wall biogenesis; peptidoglycan biosynthesis. Functionally, catalyzes the addition of meso-diaminopimelic acid to the nucleotide precursor UDP-N-acetylmuramoyl-L-alanyl-D-glutamate (UMAG) in the biosynthesis of bacterial cell-wall peptidoglycan. The protein is UDP-N-acetylmuramoyl-L-alanyl-D-glutamate--2,6-diaminopimelate ligase of Ralstonia nicotianae (strain ATCC BAA-1114 / GMI1000) (Ralstonia solanacearum).